The primary structure comprises 457 residues: Argininosuccinate lyase (457 aa).

It belongs to the lyase 1 family. Argininosuccinate lyase subfamily.

It is found in the cytoplasm. It catalyses the reaction 2-(N(omega)-L-arginino)succinate = fumarate + L-arginine. It participates in amino-acid biosynthesis; L-arginine biosynthesis; L-arginine from L-ornithine and carbamoyl phosphate: step 3/3. This Yersinia pseudotuberculosis serotype O:1b (strain IP 31758) protein is Argininosuccinate lyase.